We begin with the raw amino-acid sequence, 387 residues long: Phosphoglycerate kinase (387 aa).

Residues 21-23, R36, 59-62, R113, and R146 each bind substrate; these read DLN and HLGR. ATP-binding positions include K197, E314, and 340 to 343; that span reads GGDT.

This sequence belongs to the phosphoglycerate kinase family. In terms of assembly, monomer.

It localises to the cytoplasm. It catalyses the reaction (2R)-3-phosphoglycerate + ATP = (2R)-3-phospho-glyceroyl phosphate + ADP. It functions in the pathway carbohydrate degradation; glycolysis; pyruvate from D-glyceraldehyde 3-phosphate: step 2/5. This Aliivibrio fischeri (strain ATCC 700601 / ES114) (Vibrio fischeri) protein is Phosphoglycerate kinase.